The chain runs to 365 residues: Peptide chain release factor 2 (365 aa).

The residue at position 252 (Gln-252) is an N5-methylglutamine.

Belongs to the prokaryotic/mitochondrial release factor family. Methylated by PrmC. Methylation increases the termination efficiency of RF2.

It is found in the cytoplasm. Its function is as follows. Peptide chain release factor 2 directs the termination of translation in response to the peptide chain termination codons UGA and UAA. The protein is Peptide chain release factor 2 of Aeromonas salmonicida (strain A449).